The sequence spans 170 residues: NADH-quinone oxidoreductase subunit B (170 aa).

Cys-42, Cys-43, Cys-107, and Cys-136 together coordinate [4Fe-4S] cluster.

This sequence belongs to the complex I 20 kDa subunit family. As to quaternary structure, NDH-1 is composed of 14 different subunits. Subunits NuoB, C, D, E, F, and G constitute the peripheral sector of the complex. [4Fe-4S] cluster serves as cofactor.

It localises to the cell inner membrane. It carries out the reaction a quinone + NADH + 5 H(+)(in) = a quinol + NAD(+) + 4 H(+)(out). Its function is as follows. NDH-1 shuttles electrons from NADH, via FMN and iron-sulfur (Fe-S) centers, to quinones in the respiratory chain. The immediate electron acceptor for the enzyme in this species is believed to be ubiquinone. Couples the redox reaction to proton translocation (for every two electrons transferred, four hydrogen ions are translocated across the cytoplasmic membrane), and thus conserves the redox energy in a proton gradient. In Campylobacter concisus (strain 13826), this protein is NADH-quinone oxidoreductase subunit B.